The primary structure comprises 587 residues: General negative regulator of transcription subunit 4 (587 aa).

The RING-type zinc finger occupies 33-78 (CPLCIEPMDITDKNFFPCPCGYQICQFCYNNIRQNPELNGRCPACR). Positions 94-128 (EELKMERAKLARKEKERKHREKERKENEYTNRKHL) form a coiled coil. Residues 137–228 (NLVYVVGINP…YMDGRLIKAA (92 aa)) form the RRM domain. The C3H1-type zinc-finger motif lies at 229–256 (YGTTKYCSSYLRGLPCPNPNCMFLHEPG). Lysine 270 participates in a covalent cross-link: Glycyl lysine isopeptide (Lys-Gly) (interchain with G-Cter in ubiquitin). The residue at position 310 (threonine 310) is a Phosphothreonine. Serine 312 is subject to Phosphoserine. Phosphothreonine is present on threonine 326. Serine 360 carries the post-translational modification Phosphoserine. The tract at residues 370–412 (TLNDSLGHHTTPTTENTITSTTTTTNTNATSHSHGSKKKQSLA) is disordered. The span at 377–402 (HHTTPTTENTITSTTTTTNTNATSHS) shows a compositional bias: low complexity.

As to quaternary structure, forms a NOT protein complex that comprises NOT1, NOT2, NOT3, NOT4 and NOT5. Subunit of the 1.0 MDa CCR4-NOT core complex that contains CCR4, CAF1, NOT1, NOT2, NOT3, NOT4, NOT5, CAF40 and CAF130. In the complex interacts with NOT1. The core complex probably is part of a less characterized 1.9 MDa CCR4-NOT complex.

The protein localises to the cytoplasm. Its subcellular location is the nucleus. The catalysed reaction is S-ubiquitinyl-[E2 ubiquitin-conjugating enzyme]-L-cysteine + [acceptor protein]-L-lysine = [E2 ubiquitin-conjugating enzyme]-L-cysteine + N(6)-ubiquitinyl-[acceptor protein]-L-lysine.. Its pathway is protein modification; protein ubiquitination. Functionally, E3 ubiquitin-protein ligase component of the CCR4-NOT core complex, which in the nucleus seems to be a general transcription factor, and in the cytoplasm the major mRNA deadenylase involved in mRNA turnover. The NOT protein subcomplex negatively regulates the basal and activated transcription of many genes. Preferentially affects TC-type TATA element-dependent transcription. Could directly or indirectly inhibit component(s) of the general transcription machinery. In the cytoplasm, catalyzes monoubiquitination of RPS7/es7 in response to stalled ribosomes, initiating a HEL2-dependent response that activates the No-Go Decay (NGD) pathway. The sequence is that of General negative regulator of transcription subunit 4 (MOT2) from Saccharomyces cerevisiae (strain ATCC 204508 / S288c) (Baker's yeast).